A 193-amino-acid polypeptide reads, in one-letter code: MGEEIKRTIKFTLVFMVLLGLVYPFVMTGIANLLFPYQAKGSIIKVDGKPVGSELIGQKFTDPRWFMGRPSAVDYDATSSGGTNYALSNPKFHEELEKNIEEFLKKNPGVKRSEIPADIVTSSGSGLDPHISPKAAYLQVKRVAKVNGLPEEVVKKLVDKNIEGRFLGLFGEPRVNVLKLNLSLLEEIKKHKK.

A helical transmembrane segment spans residues 11-31 (FTLVFMVLLGLVYPFVMTGIA).

The protein belongs to the KdpC family. The system is composed of three essential subunits: KdpA, KdpB and KdpC.

The protein resides in the cell membrane. Its function is as follows. Part of the high-affinity ATP-driven potassium transport (or Kdp) system, which catalyzes the hydrolysis of ATP coupled with the electrogenic transport of potassium into the cytoplasm. This subunit acts as a catalytic chaperone that increases the ATP-binding affinity of the ATP-hydrolyzing subunit KdpB by the formation of a transient KdpB/KdpC/ATP ternary complex. This chain is Potassium-transporting ATPase KdpC subunit, found in Caldanaerobacter subterraneus subsp. tengcongensis (strain DSM 15242 / JCM 11007 / NBRC 100824 / MB4) (Thermoanaerobacter tengcongensis).